Reading from the N-terminus, the 301-residue chain is ATP synthase gamma chain (301 aa).

This sequence belongs to the ATPase gamma chain family. As to quaternary structure, F-type ATPases have 2 components, CF(1) - the catalytic core - and CF(0) - the membrane proton channel. CF(1) has five subunits: alpha(3), beta(3), gamma(1), delta(1), epsilon(1). CF(0) has three main subunits: a, b and c.

It is found in the cell inner membrane. Functionally, produces ATP from ADP in the presence of a proton gradient across the membrane. The gamma chain is believed to be important in regulating ATPase activity and the flow of protons through the CF(0) complex. In Helicobacter pylori (strain ATCC 700392 / 26695) (Campylobacter pylori), this protein is ATP synthase gamma chain.